The chain runs to 93 residues: Serine rich endogenous peptide 6 (93 aa).

The signal sequence occupies residues 1 to 27 (MGTKCYSKLRYVVVLVLLLFVFPCSLS). Short sequence motifs (SCOOP motif) lie at residues 48–62 (GIIAGSSPSGQAPNI) and 73–87 (ISEARPSKSKKGGGR). The disordered stretch occupies residues 52-93 (GSSPSGQAPNINNNYHGRRLMISEARPSKSKKGGGREPESPG). The segment covering 53-66 (SSPSGQAPNINNNY) has biased composition (polar residues). 2 short sequence motifs (sxS motif essential for MIK2 binding) span residues 54 to 56 (SPS) and 79 to 81 (SKS).

Belongs to the serine rich endogenous peptide (SCOOP) phytocytokine family. As to quaternary structure, interacts with MIK2 (via extracellular leucine-rich repeat domain); this interaction triggers the formation of complex between MIK2 and the BAK1/SERK3 and SERK4 coreceptors, and subsequent BAK1 activation by phosphorylation. Mostly expressed in seedlings shoots, and, to a lower extent, in roots.

The protein resides in the cell membrane. It is found in the secreted. It localises to the extracellular space. Its subcellular location is the apoplast. In terms of biological role, brassicaceae-specific phytocytokine (plant endogenous peptide released into the apoplast) perceived by MIK2 in a BAK1/SERK3 and SERK4 coreceptors-dependent manner, that modulates various physiological and antimicrobial processes including growth prevention and reactive oxygen species (ROS) response regulation. Inhibits root growth. The sequence is that of Serine rich endogenous peptide 6 from Arabidopsis thaliana (Mouse-ear cress).